The following is a 507-amino-acid chain: Putative pentatricopeptide repeat-containing protein At3g16710, mitochondrial (507 aa).

A mitochondrion-targeting transit peptide spans 1–48 (MRRSIATGFASIVKGFHLHSHRHRLQISNPRTAASLSLCGFCFWIRAF). PPR repeat units lie at residues 47-81 (AFSS…RPLP), 82-116 (SIID…GIPP), 117-151 (LLCT…GFEP), 152-186 (DLVT…GFKP), 187-221 (NVVT…GSRP), 222-256 (NVVT…RIEP), 257-291 (NVIT…SVYP), 292-326 (DVFT…GCYP), 327-361 (NEVI…GVVA), 362-396 (NTIT…RAPP), 397-431 (DIRT…EMDI), 432-466 (NIVT…GMKP), and 467-501 (NVIT…GFLP).

It belongs to the PPR family. P subfamily.

The protein localises to the mitochondrion. The polypeptide is Putative pentatricopeptide repeat-containing protein At3g16710, mitochondrial (Arabidopsis thaliana (Mouse-ear cress)).